Consider the following 288-residue polypeptide: Single myb histone 4 (288 aa).

Disordered regions lie at residues 1–42, 62–87, and 181–206; these read MGAP…PVLS, GLGSSKLRVPKITGPSSSPSSSSQPL, and DSLATRTPAPMNASAPKQKDPSKPSK. In terms of domain architecture, HTH myb-type spans 1–60; that stretch reads MGAPKQKWTSEEEDALRAGVRKHGAGKWRTIQKDPEFSPVLSSRSNIDLKDKWRNLSFSA. The H-T-H motif DNA-binding region spans 28–56; it reads WRTIQKDPEFSPVLSSRSNIDLKDKWRNL. A compositionally biased stretch (low complexity) spans 76–87; that stretch reads PSSSPSSSSQPL. Residues 113–181 enclose the H15 domain; it reads TLPKYGAMIM…KIDKSYRLPD (69 aa). Positions 230–250 form a coiled coil; the sequence is KVADAEAKAHDAHDQTMEAER.

It belongs to the histone H1/H5 family. SMH subfamily. As to quaternary structure, forms a homodimer and heterodimers.

The protein resides in the nucleus. It is found in the chromosome. Its subcellular location is the nucleolus. The protein localises to the telomere. Its function is as follows. Binds preferentially double-stranded telomeric repeats, but may also bind to the single telomeric strand. This Zea mays (Maize) protein is Single myb histone 4 (SMH4).